The sequence spans 373 residues: Anhydro-N-acetylmuramic acid kinase (373 aa).

12–19 contributes to the ATP binding site; the sequence is GTSLDGVD.

This sequence belongs to the anhydro-N-acetylmuramic acid kinase family.

The enzyme catalyses 1,6-anhydro-N-acetyl-beta-muramate + ATP + H2O = N-acetyl-D-muramate 6-phosphate + ADP + H(+). Its pathway is amino-sugar metabolism; 1,6-anhydro-N-acetylmuramate degradation. The protein operates within cell wall biogenesis; peptidoglycan recycling. In terms of biological role, catalyzes the specific phosphorylation of 1,6-anhydro-N-acetylmuramic acid (anhMurNAc) with the simultaneous cleavage of the 1,6-anhydro ring, generating MurNAc-6-P. Is required for the utilization of anhMurNAc either imported from the medium or derived from its own cell wall murein, and thus plays a role in cell wall recycling. This Salmonella dublin (strain CT_02021853) protein is Anhydro-N-acetylmuramic acid kinase.